A 347-amino-acid polypeptide reads, in one-letter code: MKTEKEIHQHRKDEHLSLAYKYWREEKNQTSGLTFSDSRIIPNSLPELSTKKINFSSEVFGQNFEFPFYIEAMTGGTERADKINAQLAEIAKNQHLAMAVGSQSIALKFPELAAGFSEVRKIHSSGFLFANIGAGHSLENAKRAVDMIEANALEIHVNTAQELPMDEGDREFYWLENINEIASQLEVPVVVKEVGFGISQKTFKALAKTSVSGINIGGAGGTNFAWIERKRSKNGFNLDEFGLSTLESLLEAKMADNRKSLIATGGITSAQEIFKSLILGADLSSSAGFILKNLMQTGPEKVEEVIEQWKQDLNKLFVLTGSKNIEECRKVELLYSINMLNFIQQRK.

Substrate is bound at residue 11–12; that stretch reads RK. FMN-binding positions include 72–74, serine 102, and asparagine 131; that span reads AMT. Glutamine 161 provides a ligand contact to substrate. Glutamate 162 provides a ligand contact to Mg(2+). FMN-binding positions include lysine 192, threonine 222, and 287–288; that span reads AG.

Belongs to the IPP isomerase type 2 family. As to quaternary structure, homooctamer. Dimer of tetramers. FMN serves as cofactor. The cofactor is NADPH. It depends on Mg(2+) as a cofactor.

The protein localises to the cytoplasm. It catalyses the reaction isopentenyl diphosphate = dimethylallyl diphosphate. Involved in the biosynthesis of isoprenoids. Catalyzes the 1,3-allylic rearrangement of the homoallylic substrate isopentenyl (IPP) to its allylic isomer, dimethylallyl diphosphate (DMAPP). The polypeptide is Isopentenyl-diphosphate delta-isomerase (Lactococcus lactis subsp. lactis (strain IL1403) (Streptococcus lactis)).